The primary structure comprises 495 residues: Probable biotin-dependent acyl-coenzyme A carboxylase beta3 subunit (495 aa).

Positions 1-236 (MSRITTDQLR…PLPAPQTPAP (236 aa)) constitute a CoA carboxyltransferase N-terminal domain. Residues 242-470 (TWDSVVASRR…SNAIAAEVHA (229 aa)) form the CoA carboxyltransferase C-terminal domain.

Belongs to the AccD/PCCB family. In terms of assembly, the biotin-dependent acyl-CoA carboxylase complex is composed of an AccA protein, which contains the biotin carboxylase (BC) and biotin carboxyl carrier protein (BCCP) domains, and an AccD protein, which contains the carboxyl transferase (CT) domain.

In terms of biological role, component of a biotin-dependent acyl-CoA carboxylase complex. This subunit transfers the CO2 from carboxybiotin to the CoA ester substrate. This chain is Probable biotin-dependent acyl-coenzyme A carboxylase beta3 subunit (accD3), found in Mycobacterium bovis (strain ATCC BAA-935 / AF2122/97).